The following is a 631-amino-acid chain: Probable ATP-dependent RNA helicase DDX53 (631 aa).

Residues 48–109 (EPPLCFKIKN…EMKAKAKAAI (62 aa)) form the KH domain. A Q motif motif is present at residues 222–250 (RFKDAFQQYPDLLKSIIRVGIVKPTPIQS). ATP contacts are provided by residues lysine 244, glutamine 249, 268-273 (TGTGKT), and histidine 311. The region spanning 253–428 (WPIILQGIDL…LSYLKDPMIV (176 aa)) is the Helicase ATP-binding domain. The short motif at 376-379 (DEAD) is the DEAD box element. The Helicase C-terminal domain maps to 440–601 (TVKQNIIVTT…SVPEDLVVMA (162 aa)).

It belongs to the DEAD box helicase family. In terms of tissue distribution, expressed in testis. Wide expression in various cancer tissues and cancer cell lines.

The protein localises to the nucleus. The catalysed reaction is ATP + H2O = ADP + phosphate + H(+). This Homo sapiens (Human) protein is Probable ATP-dependent RNA helicase DDX53 (DDX53).